We begin with the raw amino-acid sequence, 487 residues long: L-tartrate/succinate antiporter (487 aa).

Residues 1–9 (MKPSTEWWR) lie on the Periplasmic side of the membrane. The chain crosses the membrane as a helical span at residues 10-30 (YLAPLAVIAIIALLPVPAGLE). Residues 31-32 (NH) lie on the Cytoplasmic side of the membrane. The next 2 helical transmembrane spans lie at 33–53 (TWLY…EPVP) and 54–74 (GAVV…WLLF). Topologically, residues 75–92 (SPEQLAQPGFKFTAKSLS) are cytoplasmic. The chain crosses the membrane as a helical span at residues 93 to 113 (WAVSGFSNSVIWLIFAAFMFG). Topologically, residues 114-136 (TGYEKTGLGRRIALILVKKMGHR) are periplasmic. The helical transmembrane segment at 137–157 (TLFLGYAVMFSELILAPVTPS) threads the bilayer. Over 158–188 (NSARGAGIIYPIIRNLPPLYQSQPNDSSSRS) the chain is Cytoplasmic. Residues 189-209 (IGSYIMWMGIVADCVTSAIFL) traverse the membrane as a helical segment. Topologically, residues 210–235 (TAMAPNLLLIGLMKSASHATLSWGDW) are periplasmic. The helical transmembrane segment at 236–256 (FLGMLPLSILLVLLVPWLAYV) threads the bilayer. The Cytoplasmic portion of the chain corresponds to 257–291 (LYPPVLKSGDQVPRWAETELQAMGPLCSREKRMLG). Helical transmembrane passes span 292–312 (LMVG…AAMV) and 313–333 (GYSV…DIVS). Over 334 to 339 (NKAAWN) the chain is Cytoplasmic. A helical membrane pass occupies residues 340-360 (VFFWLASLITLATGLNNTGFI). At 361–369 (SWFGKLLAG) the chain is on the periplasmic side. The chain crosses the membrane as a helical span at residues 370 to 390 (SLSGYSPTMVMVALIVVFYLL). The Cytoplasmic portion of the chain corresponds to 391–392 (RY). Residues 393-413 (FFASATAYTSALAPMMIAAAL) traverse the membrane as a helical segment. At 414 to 417 (AMPE) the chain is on the periplasmic side. Residues 418–438 (IPLPVFCLMVGAAIGLGSILT) form a helical membrane-spanning segment. Over 439 to 464 (PYATGPSPIYYGSGYLPTADYWRLGA) the chain is Cytoplasmic. A helical transmembrane segment spans residues 465 to 485 (IFGLIFLVLLVITGLLWMPVV). Over 486-487 (LL) the chain is Periplasmic.

The protein belongs to the SLC13A/DASS transporter (TC 2.A.47) family. DIT1 subfamily.

The protein resides in the cell inner membrane. The enzyme catalyses (2R,3R)-tartrate(out) + succinate(in) = (2R,3R)-tartrate(in) + succinate(out). Catalyzes the uptake of tartrate in exchange for intracellular succinate. Essential for anaerobic L-tartrate fermentation. This is L-tartrate/succinate antiporter from Escherichia coli (strain K12).